We begin with the raw amino-acid sequence, 606 residues long: NADH-ubiquinone oxidoreductase chain 5 (606 aa).

16 helical membrane passes run 1–21, 43–63, 88–108, 117–137, 140–160, 171–191, 209–229, 241–261, 273–293, 310–330, 366–386, 413–433, 457–477, 488–508, 513–533, and 582–602; these read MNLF…PIIM, AFII…EAII, IFIP…MWYM, FFKY…ANNL, LFIG…WWYG, AILY…WFLT, LNIP…QFGL, TPVS…FLLI, MQTL…ICAL, LGLM…LHIC, MPFT…MPFL, LIAT…VLLG, LLIG…PTTI, LTAL…NLAA, FMYP…PIVM, and GLVK…LILL.

It belongs to the complex I subunit 5 family. In terms of assembly, core subunit of respiratory chain NADH dehydrogenase (Complex I) which is composed of 45 different subunits.

The protein localises to the mitochondrion inner membrane. It carries out the reaction a ubiquinone + NADH + 5 H(+)(in) = a ubiquinol + NAD(+) + 4 H(+)(out). In terms of biological role, core subunit of the mitochondrial membrane respiratory chain NADH dehydrogenase (Complex I) which catalyzes electron transfer from NADH through the respiratory chain, using ubiquinone as an electron acceptor. Essential for the catalytic activity and assembly of complex I. The sequence is that of NADH-ubiquinone oxidoreductase chain 5 (MT-ND5) from Felis catus (Cat).